Here is an 860-residue protein sequence, read N- to C-terminus: MSLIRVNRFGPRGGGRKTLKVKKKAAVRQEWDNTVNDLTVHRATPEDLVRRHEMHKSKNRALVHWELQEKALKRKWKKQKPETSSLEKRKLSIMKEILSDQYLTQDVLEKSDHLMAAAKGLFADVPRKRTGFPNVTRAPDSSQSHTGINQDPVTQSILNESIIEPQALNEVDDAGEQSTAHSQSEDSENELPNSLSQHSNRSTERFLHQLKEENSELINQLWTDIQQKIATQSQRTPPGSPSSELSAEDQKAALNATDAVKRIQAGPQPEEAAEPVDFSSSYLGQVLNTRKQKPLLAKVKRKQDMHAASKQKTNMLSSSTASADRPSSTGSSLDVLKHVIHEVEHEMEEYERCTGREVTGLQGGQGLTGFTLSLVSSLCRLVRYLKESEIQLRKEVETRQQLEQMLGDHRELIDALTAEILSLREENSTMQARLQQYMVTTDEQLISLTHAIKNCPVINNSRQESQAPERAAMGRRLVDNVEGPVISSNGSMPLMFRGEEVVEFPQEELPVKLSQGPTPTENLNLANNFPTHIFEPAVMLTPPRQKSNSEFSPLQDVLRRTVQTRPAPRIPPTVEVIEKEQNWEKKALPIDPDIQNSSEENRLFTQRWRVSHMGEDLENKGQPAFVSLSQPPCSSLPSTQQPRNPVLSEEPTVLGDGQQLRTSEALVQRKDIMARIAELTLQNSAIKAHLNNITSSGGEQGDGLREPRKQGSASEVSTNFPAVQSLTPSSMEERIAELNRQSMEARSKLLQLIEQQKLVGLNLSSSPVSPVESPLRAWAEEGKRTIEVSVPGMEASESSKCNTVSPVSGNSSRRSSGAISNSCSPLNATSGSGKFTPVNPRTKTEKKNEEGWFALSAHIP.

Disordered stretches follow at residues 127–150, 172–201, 230–250, and 294–332; these read RKRT…GINQ, DDAG…HSNR, ATQS…AEDQ, and PLLA…TGSS. Polar residues-rich tracts occupy residues 139–150, 190–200, and 230–245; these read PDSSQSHTGINQ, ELPNSLSQHSN, and ATQS…SSEL. Position 236 is a phosphothreonine (T236). S240 is subject to Phosphoserine. Low complexity predominate over residues 317–329; it reads SSSTASADRPSST. Residues 383–439 are a coiled coil; the sequence is RYLKESEIQLRKEVETRQQLEQMLGDHRELIDALTAEILSLREENSTMQARLQQYMV. Residues 623–645 are disordered; the sequence is PAFVSLSQPPCSSLPSTQQPRNP. A compositionally biased stretch (low complexity) spans 627–642; sequence SLSQPPCSSLPSTQQP. Residue S648 is modified to Phosphoserine. A disordered region spans residues 693–718; that stretch reads ITSSGGEQGDGLREPRKQGSASEVST. Positions 729 to 757 form a coiled coil; sequence SSMEERIAELNRQSMEARSKLLQLIEQQK. A phosphoserine mark is found at S765, S766, S769, and S824. A disordered region spans residues 792–860; the sequence is GMEASESSKC…GWFALSAHIP (69 aa). Over residues 804–824 the composition is skewed to low complexity; the sequence is VSPVSGNSSRRSSGAISNSCS.

As to quaternary structure, interacts with CEP120.

The protein resides in the cytoplasm. The protein localises to the cytoskeleton. It localises to the microtubule organizing center. Its subcellular location is the centrosome. It is found in the centriole. The protein resides in the spindle. Its function is as follows. Regulator required for centriole duplication, for proper bipolar spindle formation and chromosome congression in mitosis. This is Spindle and centriole-associated protein 1 (Spice1) from Mus musculus (Mouse).